Reading from the N-terminus, the 728-residue chain is Fatty acid oxidation complex subunit alpha (728 aa).

The tract at residues 1 to 189 is enoyl-CoA hydratase/isomerase; that stretch reads MLYQSETIQV…KNGLIDAVVP (189 aa). Asp-296 contributes to the substrate binding site. Residues 311 to 728 are 3-hydroxyacyl-CoA dehydrogenase; that stretch reads TIPEYAAVLG…TIAVSTGKTA (418 aa). Residues Met-324, Asp-343, 400–402, Lys-407, and Ser-429 contribute to the NAD(+) site; that span reads VVE. His-450 functions as the For 3-hydroxyacyl-CoA dehydrogenase activity in the catalytic mechanism. Asn-453 is an NAD(+) binding site. 2 residues coordinate substrate: Asn-500 and Tyr-660.

In the N-terminal section; belongs to the enoyl-CoA hydratase/isomerase family. It in the C-terminal section; belongs to the 3-hydroxyacyl-CoA dehydrogenase family. Heterotetramer of two alpha chains (FadB) and two beta chains (FadA).

The catalysed reaction is a (3S)-3-hydroxyacyl-CoA + NAD(+) = a 3-oxoacyl-CoA + NADH + H(+). The enzyme catalyses a (3S)-3-hydroxyacyl-CoA = a (2E)-enoyl-CoA + H2O. It catalyses the reaction a 4-saturated-(3S)-3-hydroxyacyl-CoA = a (3E)-enoyl-CoA + H2O. It carries out the reaction (3S)-3-hydroxybutanoyl-CoA = (3R)-3-hydroxybutanoyl-CoA. The catalysed reaction is a (3Z)-enoyl-CoA = a 4-saturated (2E)-enoyl-CoA. The enzyme catalyses a (3E)-enoyl-CoA = a 4-saturated (2E)-enoyl-CoA. The protein operates within lipid metabolism; fatty acid beta-oxidation. In terms of biological role, involved in the aerobic and anaerobic degradation of long-chain fatty acids via beta-oxidation cycle. Catalyzes the formation of 3-oxoacyl-CoA from enoyl-CoA via L-3-hydroxyacyl-CoA. It can also use D-3-hydroxyacyl-CoA and cis-3-enoyl-CoA as substrate. The protein is Fatty acid oxidation complex subunit alpha of Photorhabdus laumondii subsp. laumondii (strain DSM 15139 / CIP 105565 / TT01) (Photorhabdus luminescens subsp. laumondii).